The sequence spans 93 residues: Small ribosomal subunit protein uS15 (93 aa).

It belongs to the universal ribosomal protein uS15 family. As to quaternary structure, part of the 30S ribosomal subunit. Forms a bridge to the 50S subunit in the 70S ribosome, contacting the 23S rRNA.

In terms of biological role, one of the primary rRNA binding proteins, it binds directly to 16S rRNA where it helps nucleate assembly of the platform of the 30S subunit by binding and bridging several RNA helices of the 16S rRNA. Functionally, forms an intersubunit bridge (bridge B4) with the 23S rRNA of the 50S subunit in the ribosome. This chain is Small ribosomal subunit protein uS15, found in Ehrlichia chaffeensis (strain ATCC CRL-10679 / Arkansas).